The following is a 592-amino-acid chain: MHLYRTHTCGQLRASDTGSKVRLSGWVHRKRDHGGLIFIDLRDHYGLTQLVVSPSTPGFDLVEHVRAESVIRVDGEVVARSAETVNPNLPTGEIEVVVRQVEVLSEAAELPLPVFGEPEYPEDIRLKYRYLDLRRETLHRNIVLRSQVIQSIRRRMIDQGFLEFQTPILTASSPEGARDFLVPSRLHPTKFYALPQAPQQFKQLLMVSGFDRYFQIAPCFRDEDLRADRSLEFYQLDVEMSFVTQDDVFAAIEPVMHGVFTEFGEGKPVTPYPFPRIPYREAIAKYGSDKPDLRNPIEMQDVSEHFRGGGFGLFARILEDAKNAVWAIPGPKGGSRAFCDRMNSWAQGEGQPGLGYIFWSDDQGGWGGPIAKNLGPEKTDGLMKALGLGQGDAAFFVAGDPKVFYKFAGAARTKVGTDLKLIDEGRFEFCWIVDFPMFEWSDEEKKYDFSHNPFSMPQGELDALLNKEPGEIVAYQYDIVCNGHELCSGAIRNHRPDVMLKAFEIAGYGPEVVEEQFGGMLNAFRHGAPPHGGLAPGIDRIVMLLAGETAIREVIAFPLNQQGQDLLMNAPSEVSEKQLKELHIRLAPPIKA.

An L-aspartate-binding site is contributed by glutamate 175. The interval 199–202 is aspartate; the sequence is QQFK. Residues arginine 221 and histidine 451 each contribute to the L-aspartate site. 221-223 is an ATP binding site; sequence RDE. Glutamate 485 lines the ATP pocket. Arginine 492 is an L-aspartate binding site. Residue 537–540 participates in ATP binding; that stretch reads GIDR.

The protein belongs to the class-II aminoacyl-tRNA synthetase family. Type 1 subfamily. Homodimer.

The protein localises to the cytoplasm. The catalysed reaction is tRNA(Asx) + L-aspartate + ATP = L-aspartyl-tRNA(Asx) + AMP + diphosphate. Aspartyl-tRNA synthetase with relaxed tRNA specificity since it is able to aspartylate not only its cognate tRNA(Asp) but also tRNA(Asn). Reaction proceeds in two steps: L-aspartate is first activated by ATP to form Asp-AMP and then transferred to the acceptor end of tRNA(Asp/Asn). This chain is Aspartate--tRNA(Asp/Asn) ligase, found in Phenylobacterium zucineum (strain HLK1).